Here is a 123-residue protein sequence, read N- to C-terminus: Large ribosomal subunit protein uL14 (123 aa).

This sequence belongs to the universal ribosomal protein uL14 family. Part of the 50S ribosomal subunit. Forms a cluster with proteins L3 and L19. In the 70S ribosome, L14 and L19 interact and together make contacts with the 16S rRNA in bridges B5 and B8.

Binds to 23S rRNA. Forms part of two intersubunit bridges in the 70S ribosome. The chain is Large ribosomal subunit protein uL14 from Escherichia coli O139:H28 (strain E24377A / ETEC).